Consider the following 148-residue polypeptide: uncharacterized protein (148 aa).

The span at 37-94 (NNNNYNNNNKNNNNNNNNNNNNNNNNNNNNNNNYINSCNSNNNNNNNNNNTKNNNINS) shows a compositional bias: low complexity. Positions 37 to 99 (NNNNYNNNNK…NNINSRTDKN (63 aa)) are disordered.

This is an uncharacterized protein from Dictyostelium discoideum (Social amoeba).